A 288-amino-acid polypeptide reads, in one-letter code: NAD kinase (288 aa).

Catalysis depends on Asp-73, which acts as the Proton acceptor. NAD(+) is bound by residues 73–74 (DG), Arg-78, 144–145 (NE), Asp-174, 185–190 (TAYSLS), and Ala-209.

The protein belongs to the NAD kinase family. A divalent metal cation serves as cofactor.

It localises to the cytoplasm. It carries out the reaction NAD(+) + ATP = ADP + NADP(+) + H(+). Its function is as follows. Involved in the regulation of the intracellular balance of NAD and NADP, and is a key enzyme in the biosynthesis of NADP. Catalyzes specifically the phosphorylation on 2'-hydroxyl of the adenosine moiety of NAD to yield NADP. This is NAD kinase from Porphyromonas gingivalis (strain ATCC 33277 / DSM 20709 / CIP 103683 / JCM 12257 / NCTC 11834 / 2561).